The primary structure comprises 60 residues: Cytotoxin 1 (60 aa).

4 disulfides stabilise this stretch: Cys-3–Cys-21, Cys-14–Cys-38, Cys-42–Cys-53, and Cys-54–Cys-59.

It belongs to the three-finger toxin family. Short-chain subfamily. Type IA cytotoxin sub-subfamily. In terms of assembly, monomer in solution; Homodimer and oligomer in the presence of negatively charged lipids forming a pore with a size ranging between 20 and 30 Angstroms. As to expression, expressed by the venom gland.

It is found in the secreted. It localises to the target cell membrane. Shows cytolytic activity on many different cells by forming pore in lipid membranes. In vivo, increases heart rate or kills the animal by cardiac arrest. In addition, it binds to heparin with high affinity, interacts with Kv channel-interacting protein 1 (KCNIP1) in a calcium-independent manner, and binds to integrin alpha-V/beta-3 (ITGAV/ITGB3) with moderate affinity. The polypeptide is Cytotoxin 1 (Naja nivea (Cape cobra)).